We begin with the raw amino-acid sequence, 567 residues long: Urease subunit alpha (567 aa).

The Urease domain occupies 128–567 (GGIDAHVHFI…LPMSQRYFLF (440 aa)). His133, His135, and Lys216 together coordinate Ni(2+). An N6-carboxylysine modification is found at Lys216. Substrate is bound at residue His218. The Ni(2+) site is built by His245 and His271. The Proton donor role is filled by His319. Position 359 (Asp359) interacts with Ni(2+).

The protein belongs to the metallo-dependent hydrolases superfamily. Urease alpha subunit family. As to quaternary structure, heterotrimer of UreA (gamma), UreB (beta) and UreC (alpha) subunits. Three heterotrimers associate to form the active enzyme. The cofactor is Ni cation. In terms of processing, carboxylation allows a single lysine to coordinate two nickel ions.

It localises to the cytoplasm. The enzyme catalyses urea + 2 H2O + H(+) = hydrogencarbonate + 2 NH4(+). It functions in the pathway nitrogen metabolism; urea degradation; CO(2) and NH(3) from urea (urease route): step 1/1. The sequence is that of Urease subunit alpha from Blochmanniella pennsylvanica (strain BPEN).